We begin with the raw amino-acid sequence, 707 residues long: Tubulin polyglutamylase ttll-11 (707 aa).

Positions 124-488 (RFTIDTSRAK…PLVRDTLLLV (365 aa)) constitute a TTL domain. Residues 279-282 (QEYV), K293, and D295 contribute to the ATP site. The disordered stretch occupies residues 675-707 (RNRSGTNGRKQNFTDDNNNPNSFAHLPKINERL). Residues 677–696 (RSGTNGRKQNFTDDNNNPNS) are compositionally biased toward polar residues.

This sequence belongs to the tubulin--tyrosine ligase family. As to expression, expressed in amphid sensory neurons. Weakly expressed in body wall muscles. Isoform a: Specifically expressed in ciliated sensory neurons in the head, including the IL1s, OLQ, head CEP, and amphid neurons. In the male tail, expressed in HOA, RnA, and phasmid neurons. Isoform b: Specifically expressed in male and hermaphrodite IL2 ciliated sensory neurons, and in male-specific CEM, HOB and RnB ciliated sensory neurons.

It localises to the cell projection. The protein resides in the axon. Its subcellular location is the perikaryon. It is found in the dendrite. The protein localises to the cilium. It localises to the extracellular vesicle. It carries out the reaction L-glutamyl-[protein] + L-glutamate + ATP = gamma-L-glutamyl-L-glutamyl-[protein] + ADP + phosphate + H(+). Functionally, polyglutamylase which preferentially modifies tubulin. Involved in the side-chain initiation step of the polyglutamylation reaction. By controlling tubulin glutamylation, regulates ciliary specialization and motor-based transport. Promotes the formation of A and B tubule singlets by splaying microtubule doublets in cilia. Together with ttll-4 and 5, required for male mating. In terms of biological role, specifically promotes tubulin glutamylation in a subset of ciliated neurons including amphid, phasmid, CEP and RnA neurons. Specifically promotes tubulin glutamylation in male ciliated CEM, HOB and RnB neurons that release bioactive extracellular vesicles. Regulates the localization of TRP channel pdk-2 in male CEM, HOB and RnB neurons. Regulates the environmental release of bioactive extracellular vesicles in cilia. The protein is Tubulin polyglutamylase ttll-11 of Caenorhabditis elegans.